We begin with the raw amino-acid sequence, 66 residues long: Large ribosomal subunit protein eL24 (66 aa).

Zn(2+)-binding residues include Cys6, Cys9, Cys32, and Cys36. Residues 6–36 (CSFCGKSIEPASGFLYVRKDGSVLNFCSRKC) form a C4-type zinc finger.

This sequence belongs to the eukaryotic ribosomal protein eL24 family. As to quaternary structure, part of the 50S ribosomal subunit. Forms a cluster with proteins L3 and L14. Zn(2+) is required as a cofactor.

Its function is as follows. Binds to the 23S rRNA. This is Large ribosomal subunit protein eL24 from Picrophilus torridus (strain ATCC 700027 / DSM 9790 / JCM 10055 / NBRC 100828 / KAW 2/3).